Consider the following 298-residue polypeptide: Single myb histone 2 (298 aa).

In terms of domain architecture, HTH myb-type spans 1-61; it reads MGVPKQRWTP…KWRNLSVTAG (61 aa). The segment at residues 28 to 57 is a DNA-binding region (H-T-H motif); the sequence is WRTILRDSDFSALLRLRSNVDLKDKWRNLS. An H15 domain is found at 124–192; that stretch reads SVARLDDLIV…KVNQKYRIAP (69 aa). A coiled-coil region spans residues 237–278; that stretch reads EEAAAFAAKAVAEAEVAMAEAEEAARVAEAAENDAEAAKAFL.

It belongs to the histone H1/H5 family. SMH subfamily. In terms of assembly, forms a homodimer and heterodimers.

It localises to the nucleus. Its subcellular location is the chromosome. The protein resides in the nucleolus. It is found in the telomere. Functionally, binds preferentially double-stranded telomeric repeats, but may also bind to the single telomeric strand. This chain is Single myb histone 2 (SMH2), found in Zea mays (Maize).